The sequence spans 315 residues: Cytochrome bo(3) ubiquinol oxidase subunit 2 (315 aa).

The signal sequence occupies residues 1-24 (MRLRKYNKSLGWLSLFAGTVLLSG). Cysteine 25 is lipidated: N-palmitoyl cysteine. Cysteine 25 is lipidated: S-diacylglycerol cysteine. Residues 25–50 (CNSALLDPKGQIGLEQRSLILTAFGL) are Periplasmic-facing. Residues 51–68 (MLIVVIPAILMAVGFAWK) traverse the membrane as a helical segment. At 69-92 (YRASNKDAKYSPNWSHSNKVEAVV) the chain is on the cytoplasmic side. A helical transmembrane segment spans residues 93-111 (WTVPILIIIFLAVLTWKTT). Over 112–315 (HALEPSKPLA…MDMSHAESAH (204 aa)) the chain is Periplasmic. Residues 288 to 315 (MDMTQPEGEHSAHEGMEGMDMSHAESAH) form a disordered region. The segment covering 294–315 (EGEHSAHEGMEGMDMSHAESAH) has biased composition (basic and acidic residues).

Belongs to the cytochrome c oxidase subunit 2 family. As to quaternary structure, heterooctamer of two A chains, two B chains, two C chains and two D chains.

It localises to the cell inner membrane. Cytochrome bo(3) ubiquinol terminal oxidase is the component of the aerobic respiratory chain of E.coli that predominates when cells are grown at high aeration. Has proton pump activity across the membrane in addition to electron transfer, pumping 2 protons/electron. This Escherichia coli O6:H1 (strain CFT073 / ATCC 700928 / UPEC) protein is Cytochrome bo(3) ubiquinol oxidase subunit 2 (cyoA).